The sequence spans 427 residues: Glutamate-1-semialdehyde 2,1-aminomutase (427 aa).

K265 carries the N6-(pyridoxal phosphate)lysine modification.

Belongs to the class-III pyridoxal-phosphate-dependent aminotransferase family. HemL subfamily. Homodimer. Requires pyridoxal 5'-phosphate as cofactor.

It is found in the cytoplasm. The catalysed reaction is (S)-4-amino-5-oxopentanoate = 5-aminolevulinate. The protein operates within porphyrin-containing compound metabolism; protoporphyrin-IX biosynthesis; 5-aminolevulinate from L-glutamyl-tRNA(Glu): step 2/2. The sequence is that of Glutamate-1-semialdehyde 2,1-aminomutase from Edwardsiella ictaluri (strain 93-146).